The primary structure comprises 149 residues: Protein-export protein SecB 2 (149 aa).

It belongs to the SecB family. As to quaternary structure, homotetramer, a dimer of dimers. One homotetramer interacts with 1 SecA dimer.

The protein resides in the cytoplasm. Functionally, one of the proteins required for the normal export of preproteins out of the cell cytoplasm. It is a molecular chaperone that binds to a subset of precursor proteins, maintaining them in a translocation-competent state. It also specifically binds to its receptor SecA. The sequence is that of Protein-export protein SecB 2 from Francisella tularensis subsp. tularensis (strain FSC 198).